A 622-amino-acid polypeptide reads, in one-letter code: Phosphatidylinositol 4-kinase gamma 6 (622 aa).

Residues 38 to 95 (RRVFVQTDTGCVLGVELDRNDNVHTVKKRLQIAFNFPTEESSLTFGDMVLKNDLSAVR) form the Ubiquitin-like; degenerate domain. One can recognise a PI3K/PI4K catalytic domain in the interval 158-459 (GVEPIPVNGG…LTTEQDVLSP (302 aa)). The G-loop stretch occupies residues 164 to 170 (VNGGLGG). Residues 165 to 171 (NGGLGGA), Lys186, and 277 to 280 (QKFV) each bind ATP. Positions 310–318 (LNTDRHGGN) are catalytic loop. Positions 339–365 (PIDHGLCLPETLEDPYFEWIHWPQASI) are activation loop. Residue Asp341 participates in ATP binding. Ser565 carries the post-translational modification Phosphoserine.

Belongs to the PI3/PI4-kinase family. Type II PI4K subfamily.

The catalysed reaction is a 1,2-diacyl-sn-glycero-3-phospho-(1D-myo-inositol) + ATP = a 1,2-diacyl-sn-glycero-3-phospho-(1D-myo-inositol 4-phosphate) + ADP + H(+). Functionally, the phosphorylation of phosphatidylinositol (PI) to PI4P is the first committed step in the generation of phosphatidylinositol 4,5-bisphosphate (PIP2), a precursor of the second messenger inositol 1,4,5-trisphosphate (InsP3). The protein is Phosphatidylinositol 4-kinase gamma 6 (PI4KG6) of Arabidopsis thaliana (Mouse-ear cress).